The sequence spans 313 residues: Ribosomal RNA small subunit methyltransferase H (313 aa).

Residues 35-37 (GGH), D55, F79, D100, and Q107 contribute to the S-adenosyl-L-methionine site.

This sequence belongs to the methyltransferase superfamily. RsmH family.

The protein resides in the cytoplasm. It catalyses the reaction cytidine(1402) in 16S rRNA + S-adenosyl-L-methionine = N(4)-methylcytidine(1402) in 16S rRNA + S-adenosyl-L-homocysteine + H(+). Specifically methylates the N4 position of cytidine in position 1402 (C1402) of 16S rRNA. The sequence is that of Ribosomal RNA small subunit methyltransferase H from Burkholderia vietnamiensis (strain G4 / LMG 22486) (Burkholderia cepacia (strain R1808)).